The chain runs to 1782 residues: Vitellogenin (1782 aa).

Positions 1–15 are cleaved as a signal peptide; sequence MKLFVLAAIIAAVSS. In terms of domain architecture, Vitellogenin spans 34 to 812; that stretch reads WQVGKQYRYE…SEDSLLPKDF (779 aa). Disordered regions lie at residues 333–367 and 379–406; these read HYES…SRRS and VLKK…INDD. Basic and acidic residues predominate over residues 344–358; that stretch reads ESHEFNFPEQHEHPH. Over residues 386–400 the composition is skewed to low complexity; it reads ESSSGSSSSSADSSS. Asn569, Asn587, Asn1357, Asn1463, and Asn1596 each carry an N-linked (GlcNAc...) asparagine glycan. Residues 1449-1638 enclose the VWFD domain; sequence PYCSIDGTRI…AYSLNEENSD (190 aa). Residues Cys1451 and Cys1602 are joined by a disulfide bond.

As to quaternary structure, heterotetramer of two heavy and two light chains. Glycosylated and phosphorylated. In terms of tissue distribution, detected in oocytes (at protein level). Produced by the fat body, where it is cleaved before being secreted into hemolymph. Sequestered then by a single class of receptor mediated endocytosis in the ovary.

Its subcellular location is the secreted. The protein localises to the cytoplasm. It is found in the cytoplasmic granule. Functionally, precursor of the egg-yolk proteins that are sources of nutrients during embryonic development. This is Vitellogenin (VG) from Bombyx mori (Silk moth).